Consider the following 230-residue polypeptide: 5'-methylthioadenosine/S-adenosylhomocysteine nucleosidase (230 aa).

E12 functions as the Proton acceptor in the catalytic mechanism. Residues G78, V152, and 173–174 (ME) contribute to the substrate site. D197 functions as the Proton donor in the catalytic mechanism.

This sequence belongs to the PNP/UDP phosphorylase family. MtnN subfamily.

The catalysed reaction is S-adenosyl-L-homocysteine + H2O = S-(5-deoxy-D-ribos-5-yl)-L-homocysteine + adenine. The enzyme catalyses S-methyl-5'-thioadenosine + H2O = 5-(methylsulfanyl)-D-ribose + adenine. It catalyses the reaction 5'-deoxyadenosine + H2O = 5-deoxy-D-ribose + adenine. It participates in amino-acid biosynthesis; L-methionine biosynthesis via salvage pathway; S-methyl-5-thio-alpha-D-ribose 1-phosphate from S-methyl-5'-thioadenosine (hydrolase route): step 1/2. Functionally, catalyzes the irreversible cleavage of the glycosidic bond in both 5'-methylthioadenosine (MTA) and S-adenosylhomocysteine (SAH/AdoHcy) to adenine and the corresponding thioribose, 5'-methylthioribose and S-ribosylhomocysteine, respectively. Also cleaves 5'-deoxyadenosine, a toxic by-product of radical S-adenosylmethionine (SAM) enzymes, into 5-deoxyribose and adenine. The sequence is that of 5'-methylthioadenosine/S-adenosylhomocysteine nucleosidase from Glaesserella parasuis serovar 5 (strain SH0165) (Haemophilus parasuis).